A 931-amino-acid polypeptide reads, in one-letter code: Chitin synthase III (931 aa).

Residues asparagine 37 and asparagine 94 are each glycosylated (N-linked (GlcNAc...) asparagine). Residues 93 to 154 (PNASQLPPAG…PGGVGQAGGL (62 aa)) are disordered. Positions 102–122 (GSGGFGDNGFGQYGQPQGFGG) are enriched in gly residues. A glycan (N-linked (GlcNAc...) asparagine) is linked at asparagine 558. Helical transmembrane passes span 585–605 (FFLH…WFSL), 644–664 (IINA…FILA), 677–697 (IASF…SGYL), 731–751 (VILI…FLYL), and 759–779 (SFPY…VYAF). Residue asparagine 802 is glycosylated (N-linked (GlcNAc...) asparagine). 2 consecutive transmembrane segments (helical) span residues 858-878 (TGLV…ITSD) and 899-919 (FLLY…LWFL).

This sequence belongs to the chitin synthase family. Class III subfamily. As to expression, highly expressed in conidia and during appressorium formation.

The protein resides in the cell membrane. The enzyme catalyses [(1-&gt;4)-N-acetyl-beta-D-glucosaminyl](n) + UDP-N-acetyl-alpha-D-glucosamine = [(1-&gt;4)-N-acetyl-beta-D-glucosaminyl](n+1) + UDP + H(+). Its function is as follows. Polymerizes chitin, a structural polymer of the cell wall and septum, by transferring the sugar moiety of UDP-GlcNAc to the non-reducing end of the growing chitin polymer. Contributes to the production of conidia and the ability of fungal conidia to germinate. Involved in the fungal cell wall integrity and the ability of conidia to withstand biophysical pressure. Required for appressorium formation and evasion of insect cellular and/or humoral defenses, promoting the fungal dimorphic transition to the production of hyphal bodies that occurs within hosts, and ultimately to virulence. The polypeptide is Chitin synthase III (Metarhizium acridum (strain CQMa 102)).